Reading from the N-terminus, the 827-residue chain is uncharacterized protein (827 aa).

Residues F12–G82 form the PAS 1 domain. Positions L212 to E264 constitute a PAC 1 domain. Positions S265–R335 constitute a PAS 2 domain. The PAC 2 domain occupies V338–L390. Positions T428 to P561 constitute a GGDEF domain. An EAL domain is found at R570–S820.

This is an uncharacterized protein from Sinorhizobium fredii (strain NBRC 101917 / NGR234).